We begin with the raw amino-acid sequence, 274 residues long: Cytochrome b-c1 complex subunit Rieske, mitochondrial (274 aa).

Over 79-103 the chain is Mitochondrial matrix; that stretch reads SHTDVKVPDFCDYRRPEVLDSTKSS. The chain crosses the membrane as a helical span at residues 104-140; it reads RESSEARKSFSYMVTAVTTVGVAYAAKNAVTQFVSSM. Residues 141-274 lie on the Mitochondrial intermembrane side of the membrane; it reads SASADVLAMA…FTSDDMVVVG (134 aa). One can recognise a Rieske domain in the interval 187-272; it reads EAAVELSQLR…YEFTSDDMVV (86 aa). [2Fe-2S] cluster is bound by residues C217, H219, C236, H239, and S241. Residues C222 and C238 are joined by a disulfide bond.

The protein belongs to the Rieske iron-sulfur protein family. As to quaternary structure, component of the ubiquinol-cytochrome c oxidoreductase (cytochrome b-c1 complex, complex III, CIII), a multisubunit enzyme composed of 11 subunits. The complex is composed of 3 respiratory subunits cytochrome b, cytochrome c1 and Rieske protein UQCRFS1, 2 core protein subunits UQCRC1/QCR1 and UQCRC2/QCR2, and 6 low-molecular weight protein subunits UQCRH/QCR6, UQCRB/QCR7, UQCRQ/QCR8, UQCR10/QCR9, UQCR11/QCR10 and subunit 9, the cleavage product of Rieske protein UQCRFS1. The complex exists as an obligatory dimer and forms supercomplexes (SCs) in the inner mitochondrial membrane with NADH-ubiquinone oxidoreductase (complex I, CI) and cytochrome c oxidase (complex IV, CIV), resulting in different assemblies (supercomplex SCI(1)III(2)IV(1) and megacomplex MCI(2)III(2)IV(2)). Incorporation of the Rieske protein UQCRFS1 is the penultimate step in complex III assembly. Interacts with TTC19, which is involved in the clearance of UQCRFS1 fragments. Component of the ubiquinol-cytochrome c oxidoreductase (cytochrome b-c1 complex, complex III, CIII). Subunit 9 corresponds to the mitochondrial targeting sequence (MTS) of Rieske protein UQCRFS1. It is retained after processing and incorporated inside complex III, where it remains bound to the complex and localizes between the 2 core subunits UQCRC1/QCR1 and UQCRC2/QCR2. Requires [2Fe-2S] cluster as cofactor. Post-translationally, proteolytic processing is necessary for the correct insertion of UQCRFS1 in the complex III dimer. Several fragments are generated during UQCRFS1 insertion, most probably due to the endogenous matrix-processing peptidase (MPP) activity of the 2 core protein subunits UQCRC1/QCR1 and UQCRC2/QCR2, which are homologous to the 2 mitochondrial-processing peptidase (MPP) subunits beta-MPP and alpha-MPP respectively. The action of the protease is also necessary for the clearance of the UQCRFS1 fragments.

Its subcellular location is the mitochondrion inner membrane. The enzyme catalyses a quinol + 2 Fe(III)-[cytochrome c](out) = a quinone + 2 Fe(II)-[cytochrome c](out) + 2 H(+)(out). Component of the ubiquinol-cytochrome c oxidoreductase, a multisubunit transmembrane complex that is part of the mitochondrial electron transport chain which drives oxidative phosphorylation. The respiratory chain contains 3 multisubunit complexes succinate dehydrogenase (complex II, CII), ubiquinol-cytochrome c oxidoreductase (cytochrome b-c1 complex, complex III, CIII) and cytochrome c oxidase (complex IV, CIV), that cooperate to transfer electrons derived from NADH and succinate to molecular oxygen, creating an electrochemical gradient over the inner membrane that drives transmembrane transport and the ATP synthase. The cytochrome b-c1 complex catalyzes electron transfer from ubiquinol to cytochrome c, linking this redox reaction to translocation of protons across the mitochondrial inner membrane, with protons being carried across the membrane as hydrogens on the quinol. In the process called Q cycle, 2 protons are consumed from the matrix, 4 protons are released into the intermembrane space and 2 electrons are passed to cytochrome c. The Rieske protein is a catalytic core subunit containing a [2Fe-2S] iron-sulfur cluster. It cycles between 2 conformational states during catalysis to transfer electrons from the quinol bound in the Q(0) site in cytochrome b to cytochrome c1. Incorporation of UQCRFS1 is the penultimate step in complex III assembly. Its function is as follows. Component of the ubiquinol-cytochrome c oxidoreductase (cytochrome b-c1 complex, complex III, CIII). UQCRFS1 undergoes proteolytic processing once it is incorporated in the complex III dimer. One of the fragments, called subunit 9, corresponds to its mitochondrial targeting sequence (MTS). The proteolytic processing is necessary for the correct insertion of UQCRFS1 in the complex III dimer, but the persistence of UQCRFS1-derived fragments may prevent newly imported UQCRFS1 to be processed and assembled into complex III and is detrimental for the complex III structure and function. In Colobus polykomos (Western black-and-white colobus monkey), this protein is Cytochrome b-c1 complex subunit Rieske, mitochondrial (UQCRFS1).